The primary structure comprises 297 residues: Acetyl-coenzyme A carboxylase carboxyl transferase subunit beta (297 aa).

Residues Met-1–Pro-23 form a disordered region. One can recognise a CoA carboxyltransferase N-terminal domain in the interval Val-26–Glu-295. Zn(2+) contacts are provided by Cys-30, Cys-33, Cys-49, and Cys-52. A C4-type zinc finger spans residues Cys-30–Cys-52.

The protein belongs to the AccD/PCCB family. In terms of assembly, acetyl-CoA carboxylase is a heterohexamer composed of biotin carboxyl carrier protein (AccB), biotin carboxylase (AccC) and two subunits each of ACCase subunit alpha (AccA) and ACCase subunit beta (AccD). It depends on Zn(2+) as a cofactor.

The protein resides in the cytoplasm. It carries out the reaction N(6)-carboxybiotinyl-L-lysyl-[protein] + acetyl-CoA = N(6)-biotinyl-L-lysyl-[protein] + malonyl-CoA. It participates in lipid metabolism; malonyl-CoA biosynthesis; malonyl-CoA from acetyl-CoA: step 1/1. Its function is as follows. Component of the acetyl coenzyme A carboxylase (ACC) complex. Biotin carboxylase (BC) catalyzes the carboxylation of biotin on its carrier protein (BCCP) and then the CO(2) group is transferred by the transcarboxylase to acetyl-CoA to form malonyl-CoA. In Actinobacillus pleuropneumoniae serotype 7 (strain AP76), this protein is Acetyl-coenzyme A carboxylase carboxyl transferase subunit beta.